A 375-amino-acid chain; its full sequence is Formate dehydrogenase (375 aa).

Ile94 and Asn120 together coordinate substrate. NAD(+) is bound by residues 175–176, Asp196, 231–235, Thr257, Asp283, 312–315, and Ser358; these read RI, PLHEK, and HMSG.

The protein belongs to the D-isomer specific 2-hydroxyacid dehydrogenase family. FDH subfamily. Homodimer.

It is found in the cytoplasm. It carries out the reaction formate + NAD(+) = CO2 + NADH. Functionally, catalyzes the NAD(+)-dependent oxidation of formate to carbon dioxide. Formate oxidation is the final step in the methanol oxidation pathway in methylotrophic microorganisms. Has a role in the detoxification of exogenous formate in non-methylotrophic organisms. In Neurospora crassa (strain ATCC 24698 / 74-OR23-1A / CBS 708.71 / DSM 1257 / FGSC 987), this protein is Formate dehydrogenase.